The sequence spans 338 residues: Alcohol dehydrogenase (338 aa).

Zn(2+)-binding residues include Cys-38, His-61, Glu-62, Cys-92, Cys-95, Cys-98, Cys-106, and Cys-148.

It belongs to the zinc-containing alcohol dehydrogenase family. As to quaternary structure, homotetramer. Zn(2+) serves as cofactor.

The catalysed reaction is a primary alcohol + NAD(+) = an aldehyde + NADH + H(+). The enzyme catalyses a secondary alcohol + NAD(+) = a ketone + NADH + H(+). It catalyses the reaction ethanol + NAD(+) = acetaldehyde + NADH + H(+). It carries out the reaction 1-propanol + NAD(+) = propanal + NADH + H(+). The catalysed reaction is butan-1-ol + NAD(+) = butanal + NADH + H(+). The enzyme catalyses propan-2-ol + NAD(+) = acetone + NADH + H(+). Functionally, psychrophilic alcohol dehydrogenase that exhibits a wide range of substrate specificity, oxidizing mainly primary and secondary aliphatic alcohols, utilizing NAD(+) as a cosubstrate. In vitro, shows highest reaction rates for ethanol as a substrate and gradually decreases its reaction rates as the length and branching of the carbon chain of the alcohol substrates increase. To a lesser extent, is also able to reduce aldehydes and ketones. Do not catalyze the further oxidation of aldehydes to carboxylic acids. Cannot use NADP(+) instead of NAD(+). The sequence is that of Alcohol dehydrogenase from Moraxella sp. (strain TAE123).